Reading from the N-terminus, the 354-residue chain is UPF0283 membrane protein plu2581 (354 aa).

3 consecutive transmembrane segments (helical) span residues 71–91, 101–121, and 214–234; these read MVYG…VQWI, SALG…GSLV, and ESAL…FIAW.

Belongs to the UPF0283 family.

It is found in the cell inner membrane. This chain is UPF0283 membrane protein plu2581, found in Photorhabdus laumondii subsp. laumondii (strain DSM 15139 / CIP 105565 / TT01) (Photorhabdus luminescens subsp. laumondii).